The chain runs to 341 residues: Phosphoribosylformylglycinamidine cyclo-ligase (341 aa).

The protein belongs to the AIR synthase family.

The protein resides in the cytoplasm. The enzyme catalyses 2-formamido-N(1)-(5-O-phospho-beta-D-ribosyl)acetamidine + ATP = 5-amino-1-(5-phospho-beta-D-ribosyl)imidazole + ADP + phosphate + H(+). The protein operates within purine metabolism; IMP biosynthesis via de novo pathway; 5-amino-1-(5-phospho-D-ribosyl)imidazole from N(2)-formyl-N(1)-(5-phospho-D-ribosyl)glycinamide: step 2/2. The chain is Phosphoribosylformylglycinamidine cyclo-ligase from Xanthomonas campestris pv. campestris (strain 8004).